The chain runs to 385 residues: 1-deoxy-D-xylulose 5-phosphate reductoisomerase (385 aa).

Positions 10, 11, 12, 13, and 124 each coordinate NADPH. 1-deoxy-D-xylulose 5-phosphate is bound at residue K125. Residue E126 participates in NADPH binding. D150 contributes to the Mn(2+) binding site. 1-deoxy-D-xylulose 5-phosphate contacts are provided by S151, E152, S176, and H199. Position 152 (E152) interacts with Mn(2+). An NADPH-binding site is contributed by G205. Residues S212, N217, K218, and E221 each contribute to the 1-deoxy-D-xylulose 5-phosphate site. Position 221 (E221) interacts with Mn(2+).

Belongs to the DXR family. The cofactor is Mg(2+). Mn(2+) serves as cofactor.

It catalyses the reaction 2-C-methyl-D-erythritol 4-phosphate + NADP(+) = 1-deoxy-D-xylulose 5-phosphate + NADPH + H(+). It participates in isoprenoid biosynthesis; isopentenyl diphosphate biosynthesis via DXP pathway; isopentenyl diphosphate from 1-deoxy-D-xylulose 5-phosphate: step 1/6. Catalyzes the NADPH-dependent rearrangement and reduction of 1-deoxy-D-xylulose-5-phosphate (DXP) to 2-C-methyl-D-erythritol 4-phosphate (MEP). This is 1-deoxy-D-xylulose 5-phosphate reductoisomerase from Clostridium botulinum (strain Eklund 17B / Type B).